A 719-amino-acid chain; its full sequence is DNA ligase (719 aa).

Residues 42 to 46 (DAAYD), 92 to 93 (SL), and E126 contribute to the NAD(+) site. K128 acts as the N6-AMP-lysine intermediate in catalysis. NAD(+) is bound by residues R149, E185, K301, and K325. Zn(2+) is bound by residues C430, C433, C448, and C454. The region spanning 640–719 (ATGSPVEGKT…DDWFKLVGED (80 aa)) is the BRCT domain.

The protein belongs to the NAD-dependent DNA ligase family. LigA subfamily. The cofactor is Mg(2+). Mn(2+) is required as a cofactor.

The catalysed reaction is NAD(+) + (deoxyribonucleotide)n-3'-hydroxyl + 5'-phospho-(deoxyribonucleotide)m = (deoxyribonucleotide)n+m + AMP + beta-nicotinamide D-nucleotide.. Its function is as follows. DNA ligase that catalyzes the formation of phosphodiester linkages between 5'-phosphoryl and 3'-hydroxyl groups in double-stranded DNA using NAD as a coenzyme and as the energy source for the reaction. It is essential for DNA replication and repair of damaged DNA. In Brucella suis biovar 1 (strain 1330), this protein is DNA ligase.